Here is an 893-residue protein sequence, read N- to C-terminus: MTKLTVKALSEEIGTPVDRLLQQFSDAGINKKDGDSVSEGEKQSLLVHLKKEHGSADDSASPTRLTLQRKTRSTLSVAGSGGKSKDVQVEVRKKRTYVKASALEEEKKAEQLKAEAEEQAKRDAEEAAVRELEQKAQREAEEQAKREAEAEAKAKREAEEKAKRAEADKAKKEMTKKNEQAKKEADELKARQELEATRKAEAEAAKLVEEARKLAEENEARWKEEEQKKSAAEKDADYHVTTSSHAREAEDAADRKEEQQPRRRKKKAKPAEAAAPRGGRNQRGGRNKKAQVNKPTSMQHGFDKSATVAKQDVAIGETIVVSELASKMSVKATEVIKVMMKMGAMATINQVIDQETAQLVAEEMGHKVILRKENELEEAVLSDRDNSAEAEGRAPVVTIMGHVDHGKTSTLDYIRRAHVADAEAGGITQHIGAYHVETDNGMITFLDTPGHAAFTAMRARGAQATDIVVLVVAADDGVMPQTIEAIQHAKAAGVPLIVAVNKIDKEGANPDNVKNELAQYDVIPEEWGGENIFVHISAKQGTNIDGLLEAILLQSEVLELTAVREGMASGVVVESRLDKGRGPVATVLVQSGTLNKGDIVLCGQEYGRVRAMRDENGKDIESAGPSIPVEILGLSGVPASGDEATVVRDERKAREVANYRQGKFRDVKLARQQKAKLENMFANMEAGEVAELNVVLKADVQGSVEAIADSLLKLSTDEVKVNIVGSGVGGITETDATLAAASNAIILGFNVRADATARRTVENENLDLRYYSIIYQLIDEVKAAMGGMLAPEFKQEIIGLAQVRDVFKSPKLGAIAGCMVTEGTIKRSNPIRVLRDNVVIYEGELESLRRFKDDVAEVKNGYECGIGVKNYNDVRVGDQIEVFEIVEIKRTLD.

Disordered regions lie at residues 51 to 203 (KEHG…AEAE) and 216 to 300 (EENE…SMQH). 3 stretches are compositionally biased toward basic and acidic residues: residues 102 to 203 (ALEE…AEAE), 216 to 238 (EENE…DADY), and 245 to 261 (HARE…EQQP). In terms of domain architecture, tr-type G spans 392–561 (GRAPVVTIMG…LLQSEVLELT (170 aa)). Residues 401–408 (GHVDHGKT) are G1. Residue 401–408 (GHVDHGKT) coordinates GTP. The tract at residues 426-430 (GITQH) is G2. The segment at 447–450 (DTPG) is G3. GTP contacts are provided by residues 447-451 (DTPGH) and 501-504 (NKID). A G4 region spans residues 501 to 504 (NKID). The tract at residues 537-539 (SAK) is G5.

The protein belongs to the TRAFAC class translation factor GTPase superfamily. Classic translation factor GTPase family. IF-2 subfamily.

Its subcellular location is the cytoplasm. Its function is as follows. One of the essential components for the initiation of protein synthesis. Protects formylmethionyl-tRNA from spontaneous hydrolysis and promotes its binding to the 30S ribosomal subunits. Also involved in the hydrolysis of GTP during the formation of the 70S ribosomal complex. The chain is Translation initiation factor IF-2 from Aliivibrio fischeri (strain MJ11) (Vibrio fischeri).